Reading from the N-terminus, the 332-residue chain is MHKKILVLGAGAWGTALALQLAYKGHEVRINSWKAEHNDQMLAEGNNQKYLPSIEKFPDTLKAIQNWQASIEYFDDILVATPSSGFKKTIFELKDCMLPHQNIISATKGFCHDTYALLSEIAEDIIPNTKFALLTGPSFAKEVANKLPTAVVVASKDIEYAKYTQKLFSNENFRCYTTTDIIGAQVGGAVKNVLAIAAGIAAGMDFGVNAHAALITRGLAEIKKLGLKLGADVETFMGLSCLGDLLLTCSDNQSRNRRFGYYLGQGMSIEESLHKVNNVVEGYSTAIAVYKLAQKHEVDMPLVFATYRVLYENVDPKDMVRQLMTRQLKNEN.

NADPH is bound by residues Trp13, Lys34, and Lys108. 3 residues coordinate sn-glycerol 3-phosphate: Lys108, Gly136, and Ser138. Ala140 serves as a coordination point for NADPH. Positions 191, 244, 254, 255, and 256 each coordinate sn-glycerol 3-phosphate. The active-site Proton acceptor is the Lys191. NADPH is bound at residue Arg255. 2 residues coordinate NADPH: Val279 and Glu281.

This sequence belongs to the NAD-dependent glycerol-3-phosphate dehydrogenase family.

The protein localises to the cytoplasm. The enzyme catalyses sn-glycerol 3-phosphate + NAD(+) = dihydroxyacetone phosphate + NADH + H(+). It catalyses the reaction sn-glycerol 3-phosphate + NADP(+) = dihydroxyacetone phosphate + NADPH + H(+). It functions in the pathway membrane lipid metabolism; glycerophospholipid metabolism. In terms of biological role, catalyzes the reduction of the glycolytic intermediate dihydroxyacetone phosphate (DHAP) to sn-glycerol 3-phosphate (G3P), the key precursor for phospholipid synthesis. The chain is Glycerol-3-phosphate dehydrogenase [NAD(P)+] from Francisella philomiragia subsp. philomiragia (strain ATCC 25017 / CCUG 19701 / FSC 153 / O#319-036).